The sequence spans 374 residues: uncharacterized protein (374 aa).

Residues 1 to 46 form a disordered region; that stretch reads MVNEEEKDLTAEGDSNNTGVSPDSIKNKTLDFYPKEKTTERKTRSR. Residues 25-46 are compositionally biased toward basic and acidic residues; it reads IKNKTLDFYPKEKTTERKTRSR. The next 6 membrane-spanning stretches (helical) occupy residues 70 to 90, 127 to 147, 153 to 173, 199 to 219, 242 to 262, and 312 to 332; these read YAYIIFAAFLGMASYDYFIAA, WVFYFVFNIPLFIFGVIKIGI, TIVYIGLQNGFHFAFAYIPVI, IWLFVFAAVAGILNGIAYGLV, ISIANYNRIVNYIIIVVMLAI, and YFFGPALFASYLFVVVQAITI.

The protein to M.genitalium MG432 and MG443.

The protein localises to the cell membrane. This is an uncharacterized protein from Spiroplasma citri.